The sequence spans 122 residues: MIQQETTLNVADNSGAKRLLCIRVIGGGNRRYGGVGDVIIATVKDATPNMPVKKSDVVRAVIVRTRKSICRESGMSIRFDDNAAVLINPDGNPRGTRVFGPVARELRDKSFTKIVSLAPEVL.

It belongs to the universal ribosomal protein uL14 family. As to quaternary structure, part of the 50S ribosomal subunit. Forms a cluster with proteins L3 and L19. In the 70S ribosome, L14 and L19 interact and together make contacts with the 16S rRNA in bridges B5 and B8.

Functionally, binds to 23S rRNA. Forms part of two intersubunit bridges in the 70S ribosome. The protein is Large ribosomal subunit protein uL14 of Acaryochloris marina (strain MBIC 11017).